Reading from the N-terminus, the 1450-residue chain is MSKNNKLNGKDNRQSKIEKLSELKLRHDQLTNELYHLHEYISLVEYDPFYIPNSENYERLLEEKDVTWGSIFQEKKQLHNESSGKKVRRSVRHLRDSGSSTINELDTMSENDINLLKEVDILAKQKLQDLKLQFSNSHIKKKGNTKRAKIVKQVPNHQDKSESPQISERDVKTVVKDLKPNHRGSEIKPEIMESSDVKNEIENCDFNEKQLKLYKDDDIASESDFYFTTSSEDELPNKRRGTIKRRKRINLYVNPPKAVITNPDNIANSHYPTLHEYLDSFKILEDDMTNEEYNTFIKEQQRFAKMIKKGIETGALKYDPVTETVQPSARKVPNMFSHAKVDPIQYMYKEQNLHIHQEHLINQGLFSSKLVQNRKKQRIAGAKKIAQMIEQHFKHIAGAEDRRLKENEKQRKAIARNIIQSVKKRWNLAEKAYRILKKDEEEQLKRIQGKEHLSKMLEKSSKLLGAQLKQHPNEDDIENSTSDDFSSTGDSDNLSSSSDEESDDEINDLSEDQKNNINELKTSSTSAFSSPEISSPSKNPDLGLNSLLTNDFENESNSSDTNEEFIMGDSDTSHSDDENLTDDSEDSNDGEHDTTSDNEKSDLFPADTTNDPLAVQDVPTPSLLRGTLRTYQKQGLNWLASLYNNNTNGILADEMGLGKTIQTISLLSYLACEKHNWGPHLIVVPTSVLLNWEMEFKRFAPGFKVLTYYGNPQQRKEKRKGWNKPDAFHVCIVSYQLIVQDQHSFKRKKWQYMVLDEAHNIKNFRSTRWQALLNFNTQRRILLTGTPLQNNIAELWSLLYFLMPQTVIDGQKVSGFADLDAFQQWFGRPVDKLIETGGTYEQDNETKRTVEKLHQVLRPYLLRRLKADVEKQIPGKYEHIVYCKLSKRQRFLYDDFMSRAQTKATLASGNFMSIVNCLMQLRKVCNHPDLFEVRPIKTSFLFGESVIARYSERANSITRRIHFHDKDTLVDLQNINLQFTNNDLEKTSYHTNTINKLACINEFVEEVQKLRKQNAEEERQKSRHLKINTQNISNFYEEFMQQKLDEQENKINFIGYLNSQRCSRKTVYGMNLIRLLEMPHVSNNCIDDPNYDDLIKPLQTRLLDGRTTIEKFAVLTPGAVTSNIGELTLGMDEFVTPNSKSGIIPYEELVQLDNPFHQVQTKLTIAFPDKSLLQYDCGKLQKLAILLQQLKDGGHRALIFTQMTKVLDILEQFLNYHGYLYMRLDGATKIEDRQILTERFNSDPKITVFILSSRSGGLGINLTGADTVIFYDSDWNPAMDKQCQDRCHRIGQTRDVHIYRFVSEHTIESNILKKANQKRQLDDVIIQKGEFTTDYFSKLSVKDLFGSDVVGDLPVIDTKPLLGSDSEAIKDPKKLEKLLAQAEDEDDVKAANSALREVNVDDEDFDESSTNKTGGNILNGDDIDEDVDEYEGTNHVEEYMLRFIANGFYF.

In terms of domain architecture, HSA spans 344–417 (IQYMYKEQNL…EKQRKAIARN (74 aa)). Residues 469–618 (KQHPNEDDIE…TNDPLAVQDV (150 aa)) form a disordered region. The span at 480–497 (STSDDFSSTGDSDNLSSS) shows a compositional bias: low complexity. The span at 498-510 (SDEESDDEINDLS) shows a compositional bias: acidic residues. Low complexity-rich tracts occupy residues 523 to 540 (SSTS…SKNP) and 549 to 560 (TNDFENESNSSD). Residues 578–588 (ENLTDDSEDSN) are compositionally biased toward acidic residues. Residues 589 to 602 (DGEHDTTSDNEKSD) show a composition bias toward basic and acidic residues. A Helicase ATP-binding domain is found at 640 to 805 (ASLYNNNTNG…WSLLYFLMPQ (166 aa)). Residue 653-700 (DEMGLGKTIQTISLLSYLACEKHNWGPHLIVVPTSVLLNWEMEFKRFA) coordinates ATP. Residues 756–759 (DEAH) carry the DEAH box motif. In terms of domain architecture, Helicase C-terminal spans 1179–1332 (KLQKLAILLQ…DVIIQKGEFT (154 aa)). Residues 1400–1424 (VDDEDFDESSTNKTGGNILNGDDID) are disordered.

The protein belongs to the SNF2/RAD54 helicase family. SWR1 subfamily. In terms of assembly, component of the SWR1 chromatin-remodeling complex.

Its subcellular location is the nucleus. It carries out the reaction ATP + H2O = ADP + phosphate + H(+). Catalytic component of the SWR1 complex which mediates the ATP-dependent exchange of histone H2A for the H2A variant HZT1 leading to transcriptional regulation of selected genes by chromatin remodeling. This Candida glabrata (strain ATCC 2001 / BCRC 20586 / JCM 3761 / NBRC 0622 / NRRL Y-65 / CBS 138) (Yeast) protein is Helicase SWR1 (SWR1).